The chain runs to 297 residues: Phosphoribosylaminoimidazole-succinocarboxamide synthase (297 aa).

The protein belongs to the SAICAR synthetase family.

The catalysed reaction is 5-amino-1-(5-phospho-D-ribosyl)imidazole-4-carboxylate + L-aspartate + ATP = (2S)-2-[5-amino-1-(5-phospho-beta-D-ribosyl)imidazole-4-carboxamido]succinate + ADP + phosphate + 2 H(+). The protein operates within purine metabolism; IMP biosynthesis via de novo pathway; 5-amino-1-(5-phospho-D-ribosyl)imidazole-4-carboxamide from 5-amino-1-(5-phospho-D-ribosyl)imidazole-4-carboxylate: step 1/2. The protein is Phosphoribosylaminoimidazole-succinocarboxamide synthase of Corynebacterium urealyticum (strain ATCC 43042 / DSM 7109).